A 492-amino-acid polypeptide reads, in one-letter code: 2-succinylbenzoate--CoA ligase (492 aa).

It belongs to the ATP-dependent AMP-binding enzyme family. MenE subfamily.

The catalysed reaction is 2-succinylbenzoate + ATP + CoA = 2-succinylbenzoyl-CoA + AMP + diphosphate. The protein operates within quinol/quinone metabolism; 1,4-dihydroxy-2-naphthoate biosynthesis; 1,4-dihydroxy-2-naphthoate from chorismate: step 5/7. Its pathway is quinol/quinone metabolism; menaquinone biosynthesis. Functionally, converts 2-succinylbenzoate (OSB) to 2-succinylbenzoyl-CoA (OSB-CoA). In Staphylococcus aureus (strain MRSA252), this protein is 2-succinylbenzoate--CoA ligase.